Reading from the N-terminus, the 738-residue chain is Polyphosphate kinase (738 aa).

The disordered stretch occupies residues 1–48 (MIGNDRWVTEIETGPVTEARPDTNAREPGDRTPAAPPAATPAATTDQL). Over residues 19-30 (ARPDTNAREPGD) the composition is skewed to basic and acidic residues. N91 provides a ligand contact to ATP. R427 and R457 together coordinate Mg(2+). H487 acts as the Phosphohistidine intermediate in catalysis. Y520, R620, and H648 together coordinate ATP.

Belongs to the polyphosphate kinase 1 (PPK1) family. Requires Mg(2+) as cofactor. An intermediate of this reaction is the autophosphorylated ppk in which a phosphate is covalently linked to a histidine residue through a N-P bond.

It carries out the reaction [phosphate](n) + ATP = [phosphate](n+1) + ADP. Its function is as follows. Catalyzes the reversible transfer of the terminal phosphate of ATP to form a long-chain polyphosphate (polyP). The polypeptide is Polyphosphate kinase (Mycobacterium ulcerans (strain Agy99)).